Consider the following 501-residue polypeptide: Mitochondrial inner membrane i-AAA protease supercomplex subunit MGR3 (501 aa).

Over 1-77 (MLLQGMRLSQ…PKPNLKKKNR (77 aa)) the chain is Mitochondrial matrix. A disordered region spans residues 39–72 (RPPASNFNTQESAPIPESPANSPTRPQMAPKPNL). The chain crosses the membrane as a helical span at residues 78–95 (SLMYSIIGVSIVGLYFWF). Residues 96–501 (KSNSRKQKLP…LKAAKKEGLN (406 aa)) lie on the Mitochondrial intermembrane side of the membrane. TPR repeat units follow at residues 109-144 (QKVWKEAIWQESDKMDFNYKEALRRYIEALDECDRS), 154-187 (TRIELKIAEMYEKLNMLEEAQNLYQELLSRFFEA), 386-420 (GTYIKAVRFVRKNRDLCLERAQKCYDSVIAFAKRN), and 440-473 (ALSTYGMGVLSLHEGVLAKAEKLFKDSITMAKET).

The protein belongs to the MGR3 family. As to quaternary structure, component of the mitochondrial inner membrane i-AAA protease supercomplex composed of MGR1, MGR3 and YME1. With MGR1, forms a subcomplex that binds to YME1 and to substrates to facilitate proteolysis.

Its subcellular location is the mitochondrion inner membrane. Component of the mitochondrial inner membrane i-AAA protease supercomplex, which degrades misfolded mitochondrial proteins. Together with MGR1, functions in an adapter complex that targets substrates to the i-AAA protease for degradation. Required for growth of cells lacking the mitochondrial genome. The chain is Mitochondrial inner membrane i-AAA protease supercomplex subunit MGR3 (MGR3) from Saccharomyces cerevisiae (strain ATCC 204508 / S288c) (Baker's yeast).